Consider the following 458-residue polypeptide: Bifunctional protein GlmU (458 aa).

The pyrophosphorylase stretch occupies residues 1–230; it reads MLQIDVVILA…DWEVVGVNDK (230 aa). UDP-N-acetyl-alpha-D-glucosamine-binding positions include 9-12, lysine 23, glutamine 75, and 80-81; these read LAAG and GT. Aspartate 104 contacts Mg(2+). Positions 139, 155, 170, and 228 each coordinate UDP-N-acetyl-alpha-D-glucosamine. A Mg(2+)-binding site is contributed by asparagine 228. The linker stretch occupies residues 231–251; sequence IQLSTLERAHQQDVAKGLMEQ. The segment at 252-458 is N-acetyltransferase; the sequence is GVMFADPARF…NWKRPKKNKD (207 aa). The UDP-N-acetyl-alpha-D-glucosamine site is built by arginine 334 and lysine 352. Histidine 364 acts as the Proton acceptor in catalysis. 2 residues coordinate UDP-N-acetyl-alpha-D-glucosamine: tyrosine 367 and asparagine 378. Acetyl-CoA-binding positions include alanine 381, 387-388, serine 406, alanine 424, and arginine 441; that span reads NY.

This sequence in the N-terminal section; belongs to the N-acetylglucosamine-1-phosphate uridyltransferase family. The protein in the C-terminal section; belongs to the transferase hexapeptide repeat family. In terms of assembly, homotrimer. Requires Mg(2+) as cofactor.

It localises to the cytoplasm. The enzyme catalyses alpha-D-glucosamine 1-phosphate + acetyl-CoA = N-acetyl-alpha-D-glucosamine 1-phosphate + CoA + H(+). The catalysed reaction is N-acetyl-alpha-D-glucosamine 1-phosphate + UTP + H(+) = UDP-N-acetyl-alpha-D-glucosamine + diphosphate. Its pathway is nucleotide-sugar biosynthesis; UDP-N-acetyl-alpha-D-glucosamine biosynthesis; N-acetyl-alpha-D-glucosamine 1-phosphate from alpha-D-glucosamine 6-phosphate (route II): step 2/2. It functions in the pathway nucleotide-sugar biosynthesis; UDP-N-acetyl-alpha-D-glucosamine biosynthesis; UDP-N-acetyl-alpha-D-glucosamine from N-acetyl-alpha-D-glucosamine 1-phosphate: step 1/1. It participates in bacterial outer membrane biogenesis; LPS lipid A biosynthesis. In terms of biological role, catalyzes the last two sequential reactions in the de novo biosynthetic pathway for UDP-N-acetylglucosamine (UDP-GlcNAc). The C-terminal domain catalyzes the transfer of acetyl group from acetyl coenzyme A to glucosamine-1-phosphate (GlcN-1-P) to produce N-acetylglucosamine-1-phosphate (GlcNAc-1-P), which is converted into UDP-GlcNAc by the transfer of uridine 5-monophosphate (from uridine 5-triphosphate), a reaction catalyzed by the N-terminal domain. The protein is Bifunctional protein GlmU of Nitrosomonas eutropha (strain DSM 101675 / C91 / Nm57).